Here is a 248-residue protein sequence, read N- to C-terminus: MLESRRLLNYSGEVLLNTPSQLSLPLSLPDDETFDSFYAGENASLVAAIQTAIHQSHGSYIYFWSRDGGGKSHLLHAACAELSLAGDAVGYVPLDKRAYFVPDVLEGMEHLSLVCIDNVQCIAGDEEWELALFNLYNRVLELGRTCLLITGDRPPRQIDLQLPDLASRLDWGQIYRLQPLSDEEKIQALQLRAKLRGFELPEDVGRFVLKRLDRKMRTLFEMLDELDHASIVAQRKLTIPFVKDILKL.

It belongs to the DnaA family. HdA subfamily. The active form seems to be an ADP-bound monomer. Forms the RIDA complex (regulatory inactivation of DnaA) of ATP-DnaA, ADP-Hda and the DNA-loaded beta sliding clamp (dnaN).

Functionally, mediates the interaction of DNA replication initiator protein DnaA with DNA polymerase subunit beta sliding clamp (dnaN). Stimulates hydrolysis of ATP-DnaA to ADP-DnaA, rendering DnaA inactive for reinitiation, a process called regulatory inhibition of DnaA or RIDA. This is DnaA regulatory inactivator Hda from Proteus mirabilis (strain HI4320).